The chain runs to 68 residues: DNA-directed RNA polymerase subunit omega (68 aa).

Belongs to the RNA polymerase subunit omega family. The RNAP catalytic core consists of 2 alpha, 1 beta, 1 beta' and 1 omega subunit. When a sigma factor is associated with the core the holoenzyme is formed, which can initiate transcription.

The catalysed reaction is RNA(n) + a ribonucleoside 5'-triphosphate = RNA(n+1) + diphosphate. Its function is as follows. Promotes RNA polymerase assembly. Latches the N- and C-terminal regions of the beta' subunit thereby facilitating its interaction with the beta and alpha subunits. The polypeptide is DNA-directed RNA polymerase subunit omega (Sulfurovum sp. (strain NBC37-1)).